The following is an 83-amino-acid chain: Hainantoxin-III 5 (83 aa).

The signal sequence occupies residues 1–21 (MKASRFLALAGLVLLFVVGYA). A propeptide spanning residues 22–48 (SESEEKEFPRELLSKIFAVDDFKGEER) is cleaved from the precursor. 3 disulfide bridges follow: C50/C65, C57/C70, and C64/C77. Position 81 is a leucine amide (L81).

It belongs to the neurotoxin 10 (Hwtx-1) family. 15 (Hntx-3) subfamily. Monomer. As to expression, expressed by the venom gland.

It is found in the secreted. Its function is as follows. Selective antagonist of neuronal tetrodotoxin (TTX)-sensitive voltage-gated sodium channels (IC(50)=1270 nM on Nav1.1/SCN1A, 270 nM on Nav1.2/SCN2A, 491 nM on Nav1.3/SCN3A and 232 nM on Nav1.7/SCN9A). This toxin suppress Nav1.7 current amplitude without significantly altering the activation, inactivation, and repriming kinetics. Short extreme depolarizations partially activate the toxin-bound channel, indicating voltage-dependent inhibition of this toxin. This toxin increases the deactivation of the Nav1.7 current after extreme depolarizations. The toxin-Nav1.7 complex is gradually dissociated upon prolonged strong depolarizations in a voltage-dependent manner, and the unbound toxin rebinds to Nav1.7 after a long repolarization. Moreover, analysis of chimeric channels showed that the DIIS3-S4 linker is critical for toxin binding to Nav1.7. These data are consistent with this toxin interacting with Nav1.7 site 4 and trapping the domain II voltage sensor in the closed state. The polypeptide is Hainantoxin-III 5 (Cyriopagopus hainanus (Chinese bird spider)).